A 210-amino-acid polypeptide reads, in one-letter code: FMN-dependent NADH:quinone oxidoreductase (210 aa).

FMN is bound by residues serine 9 and 15–17; that span reads SHS.

The protein belongs to the azoreductase type 1 family. Homodimer. Requires FMN as cofactor.

It catalyses the reaction 2 a quinone + NADH + H(+) = 2 a 1,4-benzosemiquinone + NAD(+). The enzyme catalyses N,N-dimethyl-1,4-phenylenediamine + anthranilate + 2 NAD(+) = 2-(4-dimethylaminophenyl)diazenylbenzoate + 2 NADH + 2 H(+). Quinone reductase that provides resistance to thiol-specific stress caused by electrophilic quinones. In terms of biological role, also exhibits azoreductase activity. Catalyzes the reductive cleavage of the azo bond in aromatic azo compounds to the corresponding amines. This chain is FMN-dependent NADH:quinone oxidoreductase, found in Mesorhizobium japonicum (strain LMG 29417 / CECT 9101 / MAFF 303099) (Mesorhizobium loti (strain MAFF 303099)).